A 333-amino-acid polypeptide reads, in one-letter code: Holliday junction branch migration complex subunit RuvB (333 aa).

The large ATPase domain (RuvB-L) stretch occupies residues 4 to 185 (IDRLVSTDVL…FGIVQRLEFY (182 aa)). ATP is bound by residues Ile-24, Arg-25, Gly-66, Lys-69, Thr-70, Thr-71, 132–134 (EDY), Arg-175, Tyr-185, and Arg-222. Residue Thr-70 participates in Mg(2+) binding. The interval 186-256 (SVPDLEHIVS…IAIKALEMLN (71 aa)) is small ATPAse domain (RuvB-S). The interval 259–333 (KEGLDYMDSK…HAYQHFICGG (75 aa)) is head domain (RuvB-H). 3 residues coordinate DNA: Arg-295, Arg-314, and Arg-319.

Belongs to the RuvB family. In terms of assembly, homohexamer. Forms an RuvA(8)-RuvB(12)-Holliday junction (HJ) complex. HJ DNA is sandwiched between 2 RuvA tetramers; dsDNA enters through RuvA and exits via RuvB. An RuvB hexamer assembles on each DNA strand where it exits the tetramer. Each RuvB hexamer is contacted by two RuvA subunits (via domain III) on 2 adjacent RuvB subunits; this complex drives branch migration. In the full resolvosome a probable DNA-RuvA(4)-RuvB(12)-RuvC(2) complex forms which resolves the HJ.

It is found in the cytoplasm. It carries out the reaction ATP + H2O = ADP + phosphate + H(+). Functionally, the RuvA-RuvB-RuvC complex processes Holliday junction (HJ) DNA during genetic recombination and DNA repair, while the RuvA-RuvB complex plays an important role in the rescue of blocked DNA replication forks via replication fork reversal (RFR). RuvA specifically binds to HJ cruciform DNA, conferring on it an open structure. The RuvB hexamer acts as an ATP-dependent pump, pulling dsDNA into and through the RuvAB complex. RuvB forms 2 homohexamers on either side of HJ DNA bound by 1 or 2 RuvA tetramers; 4 subunits per hexamer contact DNA at a time. Coordinated motions by a converter formed by DNA-disengaged RuvB subunits stimulates ATP hydrolysis and nucleotide exchange. Immobilization of the converter enables RuvB to convert the ATP-contained energy into a lever motion, pulling 2 nucleotides of DNA out of the RuvA tetramer per ATP hydrolyzed, thus driving DNA branch migration. The RuvB motors rotate together with the DNA substrate, which together with the progressing nucleotide cycle form the mechanistic basis for DNA recombination by continuous HJ branch migration. Branch migration allows RuvC to scan DNA until it finds its consensus sequence, where it cleaves and resolves cruciform DNA. The chain is Holliday junction branch migration complex subunit RuvB from Hamiltonella defensa subsp. Acyrthosiphon pisum (strain 5AT).